Here is a 211-residue protein sequence, read N- to C-terminus: Probable nicotinate-nucleotide adenylyltransferase (211 aa).

The protein belongs to the NadD family.

It carries out the reaction nicotinate beta-D-ribonucleotide + ATP + H(+) = deamido-NAD(+) + diphosphate. It participates in cofactor biosynthesis; NAD(+) biosynthesis; deamido-NAD(+) from nicotinate D-ribonucleotide: step 1/1. Catalyzes the reversible adenylation of nicotinate mononucleotide (NaMN) to nicotinic acid adenine dinucleotide (NaAD). This is Probable nicotinate-nucleotide adenylyltransferase from Corynebacterium kroppenstedtii (strain DSM 44385 / JCM 11950 / CIP 105744 / CCUG 35717).